We begin with the raw amino-acid sequence, 327 residues long: Serine/threonine-protein phosphatase PP1-beta catalytic subunit (327 aa).

Alanine 2 is modified (N-acetylalanine). 4 residues coordinate Mn(2+): aspartate 63, histidine 65, aspartate 91, and asparagine 123. Histidine 124 serves as the catalytic Proton donor. Mn(2+) is bound by residues histidine 172 and histidine 247. Residues glutamine 305–arginine 327 are disordered. Position 316 is a phosphothreonine (threonine 316).

This sequence belongs to the PPP phosphatase family. PP-1 subfamily. PP1 comprises a catalytic subunit, PPP1CA, PPP1CB or PPP1CC, which is folded into its native form by inhibitor 2 and glycogen synthetase kinase 3, and then complexed to one or several targeting or regulatory subunits. The targeting or regulatory subunits determine the substrate specificity of PP1. PPP1R12A, PPP1R12B and PPP1R12C mediate binding to myosin. PPP1R3A (in skeletal muscle), PPP1R3B (in liver), PPP1R3C, PPP1R3D and PPP1R3F (in brain) mediate binding to glycogen. PPP1R15A and PPP1R15B mediate binding to EIF2S1. Part of a complex containing PPP1R15B, PP1 and NCK1/2. Interacts with PPP1R7 and PPP1R12C. Interacts with PPP1R16B. Component of the PTW/PP1 phosphatase complex, composed of PPP1R10/PNUTS, TOX4, WDR82, and PPP1CA or PPP1CB or PPP1CC. Interacts with PPP1R8. Interacts with PPP1R12A and NUAK1; the interaction is direct. Interacts with TRIM28; the interaction is weak. Interacts with FOXP3. Interacts with RRP1B. Interacts with SERPINE1. Interacts with LZTR1. Component of the SHOC2-MRAS-PP1c (SMP) complex consisting of SHOC2, GTP-bound M-Ras/MRAS and the catalytic subunit of protein phosphatase 1 (either PPP1CA, PPP1CB or PPP1CC). SHOC2 and PP1c preferably bind M-Ras/MRAS, but they also bind K-Ras/KRAS, N-Ras/NRAS and H-Ras/HRAS; these interactions are GTP-dependent and both SHOC2 and PP1c are required to form a stable complex. Interacts with SHOC2 in the absence of Ras GTPases. Requires Mn(2+) as cofactor.

It is found in the cytoplasm. The protein resides in the nucleus. Its subcellular location is the nucleoplasm. The protein localises to the nucleolus. It carries out the reaction O-phospho-L-seryl-[protein] + H2O = L-seryl-[protein] + phosphate. It catalyses the reaction O-phospho-L-threonyl-[protein] + H2O = L-threonyl-[protein] + phosphate. The enzyme catalyses O-phospho-L-seryl-[myosin light chain] + H2O = L-seryl-[myosin light chain] + phosphate. The catalysed reaction is O-phospho-L-threonyl-[myosin light chain] + H2O = L-threonyl-[myosin light chain] + phosphate. Inhibited by the toxins okadaic acid, tautomycin and microcystin Leu-Arg. The phosphatase activity of the PPP1R15A-PP1 complex toward EIF2S1 is specifically inhibited by Salubrinal, a drug that protects cells from endoplasmic reticulum stress. Protein phosphatase that associates with over 200 regulatory proteins to form highly specific holoenzymes which dephosphorylate hundreds of biological targets. Protein phosphatase (PP1) is essential for cell division, it participates in the regulation of glycogen metabolism, muscle contractility and protein synthesis. Involved in regulation of ionic conductances and long-term synaptic plasticity. Component of the PTW/PP1 phosphatase complex, which plays a role in the control of chromatin structure and cell cycle progression during the transition from mitosis into interphase. In balance with CSNK1D and CSNK1E, determines the circadian period length, through the regulation of the speed and rhythmicity of PER1 and PER2 phosphorylation. May dephosphorylate CSNK1D and CSNK1E. Core component of the SHOC2-MRAS-PP1c (SMP) holophosphatase complex that regulates the MAPK pathway activation. The SMP complex specifically dephosphorylates the inhibitory phosphorylation at 'Ser-259' of RAF1 kinase, 'Ser-365' of BRAF kinase and 'Ser-214' of ARAF kinase, stimulating their kinase activities. The SMP complex enhances the dephosphorylation activity and substrate specificity of PP1c. The protein is Serine/threonine-protein phosphatase PP1-beta catalytic subunit (PPP1CB) of Bos taurus (Bovine).